The chain runs to 195 residues: N-(5'-phosphoribosyl)anthranilate isomerase (195 aa).

Belongs to the TrpF family.

The catalysed reaction is N-(5-phospho-beta-D-ribosyl)anthranilate = 1-(2-carboxyphenylamino)-1-deoxy-D-ribulose 5-phosphate. Its pathway is amino-acid biosynthesis; L-tryptophan biosynthesis; L-tryptophan from chorismate: step 3/5. In Streptococcus gordonii (strain Challis / ATCC 35105 / BCRC 15272 / CH1 / DL1 / V288), this protein is N-(5'-phosphoribosyl)anthranilate isomerase.